A 251-amino-acid polypeptide reads, in one-letter code: Hydroxyacylglutathione hydrolase (251 aa).

Residues His-53, His-55, Asp-57, His-58, His-110, Asp-127, and His-165 each contribute to the Zn(2+) site.

The protein belongs to the metallo-beta-lactamase superfamily. Glyoxalase II family. In terms of assembly, monomer. Zn(2+) serves as cofactor.

The catalysed reaction is an S-(2-hydroxyacyl)glutathione + H2O = a 2-hydroxy carboxylate + glutathione + H(+). It functions in the pathway secondary metabolite metabolism; methylglyoxal degradation; (R)-lactate from methylglyoxal: step 2/2. Its function is as follows. Thiolesterase that catalyzes the hydrolysis of S-D-lactoyl-glutathione to form glutathione and D-lactic acid. The chain is Hydroxyacylglutathione hydrolase from Enterobacter sp. (strain 638).